The sequence spans 5263 residues: Fibroin heavy chain (5263 aa).

The first 21 residues, 1–21 (MRVKTFVILCCALQYVAYTNA), serve as a signal peptide directing secretion. Positions 149–5206 (AAVGAGAGAG…GSGAGAGGSV (5058 aa)) are highly repetitive. Cysteine 5260 and cysteine 5263 are oxidised to a cystine.

As to quaternary structure, silk fibroin elementary unit consists in a disulfide-linked heavy and light chain and a p25 glycoprotein in molar ratios of 6:6:1. This results in a complex of approximately 2.3 MDa. The interchain disulfide bridge is essential for the intracellular transport and secretion of fibroin. As to expression, produced exclusively in the posterior (PSG) section of silk glands, which are essentially modified salivary glands.

Its function is as follows. Core component of the silk filament; a strong, insoluble and chemically inert fiber. In Bombyx mori (Silk moth), this protein is Fibroin heavy chain (FIBH).